The primary structure comprises 169 residues: Ribosome maturation factor RimM (169 aa).

Positions Asp94–Leu168 constitute a PRC barrel domain.

Belongs to the RimM family. In terms of assembly, binds ribosomal protein uS19.

The protein localises to the cytoplasm. Functionally, an accessory protein needed during the final step in the assembly of 30S ribosomal subunit, possibly for assembly of the head region. Essential for efficient processing of 16S rRNA. May be needed both before and after RbfA during the maturation of 16S rRNA. It has affinity for free ribosomal 30S subunits but not for 70S ribosomes. The chain is Ribosome maturation factor RimM from Cereibacter sphaeroides (strain ATCC 17023 / DSM 158 / JCM 6121 / CCUG 31486 / LMG 2827 / NBRC 12203 / NCIMB 8253 / ATH 2.4.1.) (Rhodobacter sphaeroides).